The following is a 355-amino-acid chain: MKLNVNLPRKPYDIIIEKGSLSKVGQWVKELWQPQKIALITDNRVGSLYAEKVKLGLEDAGFEIVVFDFLEGEASKNLTTVNKAYEFLLKQGMTRSDGIIALGGGVVGDLAGFVASTYMRGIHFLQIPTSLTAQVDSSIGGKTGVNTPLAKNMVGTFTQPDGVLIDPDTLNTLGKRELIEGMGEVIKYGLIADVELWEILKDLDGSTDSILENAEKIIYHSCNVKRQIVVEDELDNGVRLYLNFGHTIGHAIEATAGYGKVMHGEAVAIGMVQISRIAETKGLMLQGITEKIEAMCLKFGLPTDYSPWNVEPMYQALKHDKKTRGQMIKMVVVPQLGQAAINQISLEEMKEYLEK.

Residues 71-76 (EGEASK), 105-109 (GVVGD), 129-130 (TS), K142, K151, and 169-172 (TLNT) contribute to the NAD(+) site. Zn(2+) is bound by residues E184, H246, and H263.

This sequence belongs to the sugar phosphate cyclases superfamily. Dehydroquinate synthase family. The cofactor is NAD(+). Co(2+) serves as cofactor. It depends on Zn(2+) as a cofactor.

It is found in the cytoplasm. The catalysed reaction is 7-phospho-2-dehydro-3-deoxy-D-arabino-heptonate = 3-dehydroquinate + phosphate. It participates in metabolic intermediate biosynthesis; chorismate biosynthesis; chorismate from D-erythrose 4-phosphate and phosphoenolpyruvate: step 2/7. Functionally, catalyzes the conversion of 3-deoxy-D-arabino-heptulosonate 7-phosphate (DAHP) to dehydroquinate (DHQ). This chain is 3-dehydroquinate synthase, found in Streptococcus mutans serotype c (strain ATCC 700610 / UA159).